The sequence spans 230 residues: Thiamine-triphosphatase (230 aa).

The residue at position 2 (Ala2) is an N-acetylalanine. The 197-residue stretch at 5–201 (LIEVERKFLP…AKLIVYLQRF (197 aa)) folds into the CYTH domain. Mg(2+) contacts are provided by Glu7 and Glu9. Substrate contacts are provided by Lys11, Arg55, Arg57, Lys65, and Arg125. Mg(2+)-binding residues include Asp145, Glu157, and Glu159. Position 157 (Glu157) interacts with substrate. A substrate-binding site is contributed by Lys193.

It belongs to the ThTPase family. As to quaternary structure, monomer. It depends on Mg(2+) as a cofactor.

The protein resides in the cytoplasm. It carries out the reaction thiamine triphosphate + H2O = thiamine diphosphate + phosphate + H(+). Hydrolase highly specific for thiamine triphosphate (ThTP). The sequence is that of Thiamine-triphosphatase (THTPA) from Macaca fascicularis (Crab-eating macaque).